A 79-amino-acid chain; its full sequence is Small ribosomal subunit protein uS17 (79 aa).

The protein belongs to the universal ribosomal protein uS17 family. As to quaternary structure, part of the 30S ribosomal subunit.

One of the primary rRNA binding proteins, it binds specifically to the 5'-end of 16S ribosomal RNA. The polypeptide is Small ribosomal subunit protein uS17 (Rhodospirillum rubrum (strain ATCC 11170 / ATH 1.1.1 / DSM 467 / LMG 4362 / NCIMB 8255 / S1)).